The chain runs to 241 residues: Cysteine-rich secretory protein 3 (241 aa).

Residues methionine 1–leucine 19 form the signal peptide. One can recognise an SCP domain in the interval serine 44–tyrosine 170. Residues asparagine 118, asparagine 132, and asparagine 175 are each glycosylated (N-linked (GlcNAc...) asparagine). 5 disulfide bridges follow: cysteine 194/cysteine 201, cysteine 197/cysteine 206, cysteine 210/cysteine 241, cysteine 219/cysteine 235, and cysteine 226/cysteine 239. The 32-residue stretch at cysteine 210–cysteine 241 folds into the ShKT domain.

The protein belongs to the CRISP family. Interacts with A1BG. Interacts with KNG1 isoform LMW. In terms of tissue distribution, expressed in submandibular gland.

The protein localises to the cytoplasmic vesicle. Its subcellular location is the secretory vesicle. Its function is as follows. This protein is supposed to help spermatozoa undergo functional maturation while they move from the testis to the ductus deferens. This chain is Cysteine-rich secretory protein 3 (Crisp3), found in Mus musculus (Mouse).